The primary structure comprises 141 residues: Lutropin subunit beta (141 aa).

The signal sequence occupies residues 1–20 (MERLQGLLLWLLLSPSVVWA). 5 disulfides stabilise this stretch: Cys29-Cys77, Cys43-Cys92, Cys54-Cys108, Cys58-Cys110, and Cys113-Cys120. Asn33 carries an N-linked (GlcNAc...) asparagine glycan.

Belongs to the glycoprotein hormones subunit beta family. Heterodimer of a common alpha chain and a unique beta chain which confers biological specificity to thyrotropin, lutropin, follitropin and gonadotropin.

Its subcellular location is the secreted. Its function is as follows. Promotes spermatogenesis and ovulation by stimulating the testes and ovaries to synthesize steroids. This Mus musculus (Mouse) protein is Lutropin subunit beta (Lhb).